The following is a 364-amino-acid chain: PHD finger protein 6 (364 aa).

An N-acetylserine modification is found at Ser-2. 2 short sequence motifs (nuclear localization signal) span residues 13–16 (RQRK) and 129–133 (RKHKK). The C2HC pre-PHD-type 1 zinc finger occupies 14–52 (QRKCGFCKSNRDKECGQLLISENQKVAAHHKCMLFSSAL). The segment at 14-132 (QRKCGFCKSN…IYMVYCRKHK (119 aa)) is extended PHD1 domain (ePHD1). The segment at 80 to 132 (LMCSLCHCPGATIGCDVKTCHRTYHYHCALHDKAQIREKPSQGIYMVYCRKHK) adopts a PHD-type 1 zinc-finger fold. Ser-138, Ser-145, and Ser-155 each carry phosphoserine. Positions 139-211 (EADLEESFNE…RSSPNDTRPK (73 aa)) are disordered. The short motif at 157–169 (KTKKKSRKGRPRK) is the Nucleolar localization signal element. The span at 157–171 (KTKKKSRKGRPRKTN) shows a compositional bias: basic residues. A Glycyl lysine isopeptide (Lys-Gly) (interchain with G-Cter in SUMO2) cross-link involves residue Lys-173. Phosphoserine occurs at positions 183 and 199. Residues 209-249 (RPKCGFCHVGEEENEARGKLHIFNAKKAAAHYKCMLFSSGT) form a C2HC pre-PHD-type 2 zinc finger. The segment at 209–330 (RPKCGFCHVG…IYKLYCKNHS (122 aa)) is extended PHD2 domain (ePHD2). Lys-227 participates in a covalent cross-link: Glycyl lysine isopeptide (Lys-Gly) (interchain with G-Cter in SUMO2). A PHD-type 2 zinc finger spans residues 278-330 (MKCTLCSQPGATIGCEIKACVKTYHYHCGVQDKAKYIENMSRGIYKLYCKNHS). The interval 330–364 (SGNDERDEEDEERESKSRGRVAIDQQLTQQQLNGN) is disordered. Residues 354–364 (QQLTQQQLNGN) show a composition bias toward polar residues. Position 357 is a phosphothreonine (Thr-357).

Interacts with UBTF. Interacts with the NuRD complex component RBBP4 (via the nucleolar localization motif), the interaction mediates transcriptional repression activity. At 12.5 dpc it is highly expressed in the embryonic central nervous system and at lower levels in other tissues. Very low levels present throughout the adult brain.

The protein resides in the nucleus. Its subcellular location is the nucleolus. It is found in the chromosome. The protein localises to the centromere. It localises to the kinetochore. Its function is as follows. Transcriptional regulator that associates with ribosomal RNA promoters and suppresses ribosomal RNA (rRNA) transcription. The sequence is that of PHD finger protein 6 (Phf6) from Mus musculus (Mouse).